Here is a 159-residue protein sequence, read N- to C-terminus: 3-dehydroquinate dehydratase (159 aa).

Y22 serves as the catalytic Proton acceptor. Substrate is bound by residues N73, H79, and D86. The Proton donor role is filled by H99. Substrate-binding positions include 100 to 101 (IS) and R110.

This sequence belongs to the type-II 3-dehydroquinase family. As to quaternary structure, homododecamer.

The enzyme catalyses 3-dehydroquinate = 3-dehydroshikimate + H2O. The protein operates within metabolic intermediate biosynthesis; chorismate biosynthesis; chorismate from D-erythrose 4-phosphate and phosphoenolpyruvate: step 3/7. Functionally, catalyzes a trans-dehydration via an enolate intermediate. The sequence is that of 3-dehydroquinate dehydratase from Campylobacter jejuni subsp. jejuni serotype O:6 (strain 81116 / NCTC 11828).